Consider the following 360-residue polypeptide: Phospho-N-acetylmuramoyl-pentapeptide-transferase (360 aa).

10 helical membrane passes run 26–46, 72–92, 94–114, 132–152, 168–188, 199–219, 236–256, 263–283, 288–308, and 338–358; these read AIVS…RMIA, PTMG…LWAY, SNPY…IGFV, WKYF…YLAG, VMPQ…VGTG, GLAI…AWAT, AGEL…FLWF, VFMG…IAVL, FLLV…ILQV, and VIVR…ATLK.

Belongs to the glycosyltransferase 4 family. MraY subfamily. Mg(2+) is required as a cofactor.

The protein resides in the cell inner membrane. It carries out the reaction UDP-N-acetyl-alpha-D-muramoyl-L-alanyl-gamma-D-glutamyl-meso-2,6-diaminopimeloyl-D-alanyl-D-alanine + di-trans,octa-cis-undecaprenyl phosphate = di-trans,octa-cis-undecaprenyl diphospho-N-acetyl-alpha-D-muramoyl-L-alanyl-D-glutamyl-meso-2,6-diaminopimeloyl-D-alanyl-D-alanine + UMP. It participates in cell wall biogenesis; peptidoglycan biosynthesis. Catalyzes the initial step of the lipid cycle reactions in the biosynthesis of the cell wall peptidoglycan: transfers peptidoglycan precursor phospho-MurNAc-pentapeptide from UDP-MurNAc-pentapeptide onto the lipid carrier undecaprenyl phosphate, yielding undecaprenyl-pyrophosphoryl-MurNAc-pentapeptide, known as lipid I. This Klebsiella pneumoniae (strain 342) protein is Phospho-N-acetylmuramoyl-pentapeptide-transferase.